The chain runs to 356 residues: Probable D-xylulose reductase A (356 aa).

3 residues coordinate Zn(2+): C45, H70, and E71. NAD(+) is bound at residue 180–185 (GAGPVG).

It belongs to the zinc-containing alcohol dehydrogenase family. Zn(2+) is required as a cofactor.

The enzyme catalyses xylitol + NAD(+) = D-xylulose + NADH + H(+). It participates in carbohydrate degradation; L-arabinose degradation via L-arabinitol; D-xylulose 5-phosphate from L-arabinose (fungal route): step 4/5. Xylitol dehydrogenase which catalyzes the conversion of xylitol to D-xylulose. Xylose is a major component of hemicelluloses such as xylan. Most fungi utilize D-xylose via three enzymatic reactions, xylose reductase (XR), xylitol dehydrogenase (XDH), and xylulokinase, to form xylulose 5-phosphate, which enters pentose phosphate pathway. The protein is Probable D-xylulose reductase A (xdhA) of Arthroderma otae (strain ATCC MYA-4605 / CBS 113480) (Microsporum canis).